Reading from the N-terminus, the 360-residue chain is Small ribosomal subunit protein bS1m (360 aa).

Over residues 1-15 (MSSSNLSSILRNSRI) the composition is skewed to low complexity. The disordered stretch occupies residues 1–31 (MSSSNLSSILRNSRIAQVPKPKGPLFSPDKK).

Belongs to the bacterial ribosomal protein bS1 family. In terms of assembly, component of the mitochondrial small ribosomal subunit.

The protein localises to the mitochondrion. Involved in mitochondrial genome encoded proteins translation. The polypeptide is Small ribosomal subunit protein bS1m (MRP51) (Eremothecium gossypii (strain ATCC 10895 / CBS 109.51 / FGSC 9923 / NRRL Y-1056) (Yeast)).